A 362-amino-acid polypeptide reads, in one-letter code: Adenosine kinase (362 aa).

N-acetylalanine is present on Ala-2. The short motif at 8–16 is the Nuclear localization signal element; sequence PKPKKLKVE. Residue Asp-35 coordinates adenosine. Ser-49 is a Mg(2+) binding site. Tyr-77 carries the post-translational modification Phosphotyrosine. Mg(2+)-binding residues include Asp-147 and Asn-148. Gln-306 is a binding site for adenosine. Asp-317 acts as the Proton acceptor in catalysis.

The protein belongs to the carbohydrate kinase PfkB family. Monomer. Mg(2+) is required as a cofactor. In terms of tissue distribution, widely expressed. Highest level in placenta, liver, muscle and kidney.

The protein localises to the nucleus. Its subcellular location is the cytoplasm. It carries out the reaction adenosine + ATP = AMP + ADP + H(+). Its pathway is purine metabolism; AMP biosynthesis via salvage pathway; AMP from adenosine: step 1/1. Its activity is regulated as follows. Activity is inhibited by 5-iodotubercidin and 5'-amino-5'-deoxyadenosine. Functionally, catalyzes the phosphorylation of the purine nucleoside adenosine at the 5' position in an ATP-dependent manner. Serves as a potential regulator of concentrations of extracellular adenosine and intracellular adenine nucleotides. The chain is Adenosine kinase from Homo sapiens (Human).